Here is a 448-residue protein sequence, read N- to C-terminus: UDP-N-acetylmuramoylalanine--D-glutamate ligase (448 aa).

Residue 116–122 coordinates ATP; the sequence is GSNAKST.

This sequence belongs to the MurCDEF family.

The protein localises to the cytoplasm. It carries out the reaction UDP-N-acetyl-alpha-D-muramoyl-L-alanine + D-glutamate + ATP = UDP-N-acetyl-alpha-D-muramoyl-L-alanyl-D-glutamate + ADP + phosphate + H(+). It functions in the pathway cell wall biogenesis; peptidoglycan biosynthesis. Functionally, cell wall formation. Catalyzes the addition of glutamate to the nucleotide precursor UDP-N-acetylmuramoyl-L-alanine (UMA). The chain is UDP-N-acetylmuramoylalanine--D-glutamate ligase from Pseudomonas syringae pv. syringae (strain B728a).